We begin with the raw amino-acid sequence, 656 residues long: Protein teflon (656 aa).

A C2H2-type 1 zinc finger spans residues 33–56 (LYCHFCRDLFTQLPEFLRHLQSNH). A disordered region spans residues 80 to 131 (DKAHEDAQSAGHNSSSGDSRSLMNSEDSRAIDGSEENSDNSPVKPEQIGKQN). The span at 89–104 (AGHNSSSGDSRSLMNS) shows a compositional bias: polar residues. 2 consecutive C2H2-type zinc fingers follow at residues 606-628 (YFCK…LISH) and 632-655 (FQCT…RNAH).

Belongs to the Teflon family.

It is found in the nucleus. The protein localises to the chromosome. Functionally, specifically required in males for proper segregation of autosomal bivalents at meiosis I. Expression is required in the male germ line prior to spermatocyte stage S4. May have a role as a bridging molecule maintaining adhesion to hold autosome bivalents together via heterochromatic connections. In Drosophila sechellia (Fruit fly), this protein is Protein teflon.